A 351-amino-acid chain; its full sequence is Histidinol-phosphate aminotransferase (351 aa).

Residue lysine 215 is modified to N6-(pyridoxal phosphate)lysine.

This sequence belongs to the class-II pyridoxal-phosphate-dependent aminotransferase family. Histidinol-phosphate aminotransferase subfamily. Requires pyridoxal 5'-phosphate as cofactor.

The enzyme catalyses L-histidinol phosphate + 2-oxoglutarate = 3-(imidazol-4-yl)-2-oxopropyl phosphate + L-glutamate. The protein operates within amino-acid biosynthesis; L-histidine biosynthesis; L-histidine from 5-phospho-alpha-D-ribose 1-diphosphate: step 7/9. The protein is Histidinol-phosphate aminotransferase of Methanocorpusculum labreanum (strain ATCC 43576 / DSM 4855 / Z).